The primary structure comprises 289 residues: Inorganic pyrophosphatase (289 aa).

N-acetylserine is present on Ser2. An N6-acetyllysine modification is found at Lys57. Mg(2+) is bound by residues Asp116, Asp121, and Asp153. The residue at position 228 (Lys228) is an N6-acetyllysine. Ser250 is subject to Phosphoserine.

It belongs to the PPase family. As to quaternary structure, homodimer. Requires Mg(2+) as cofactor. In terms of tissue distribution, expressed ubiquitously.

It is found in the cytoplasm. The catalysed reaction is diphosphate + H2O = 2 phosphate + H(+). The protein is Inorganic pyrophosphatase (PPA1) of Homo sapiens (Human).